The chain runs to 1134 residues: DENN domain-containing protein 2B (1134 aa).

A compositionally biased stretch (polar residues) spans M1 to H13. The disordered stretch occupies residues M1–I90. 2 positions are modified to phosphoserine: S30 and S32. Residues S32 to P43 show a composition bias toward pro residues. Phosphothreonine is present on T228. Position 230 is a phosphoserine (S230). 2 disordered regions span residues S233–K273 and L289–S571. Residues S249–R259 show a composition bias toward basic and acidic residues. Positions G315–P348 are enriched in low complexity. T361 carries the post-translational modification Phosphothreonine. S365 carries the phosphoserine modification. The segment covering L370–P385 has biased composition (pro residues). Positions R389–P399 are enriched in basic and acidic residues. The segment covering G406–T428 has biased composition (pro residues). Over residues R429–N443 the composition is skewed to basic residues. Residues S453–S478 are compositionally biased toward polar residues. T479 is modified (phosphothreonine). Polar residues-rich tracts occupy residues K511–D521 and S542–W555. S542 bears the Phosphoserine mark. Positions K559–H570 are enriched in basic residues. 2 positions are modified to phosphoserine: S571 and S619. Positions L633 to F658 are disordered. Residues E695 to K843 enclose the uDENN domain. The 134-residue stretch at R865–E998 folds into the cDENN domain. The 94-residue stretch at K1000–A1093 folds into the dDENN domain.

As to quaternary structure, interacts with ITSN1 and GRB2. Isoform 1 interacts with the SH3 domain of ABL1. Phosphorylated. Phosphorylation decreases ITSN1 binding.

The protein localises to the cytoplasm. The protein resides in the cell cortex. It is found in the cell membrane. Its subcellular location is the recycling endosome. Its function is as follows. May be involved in cytoskeletal organization and tumorogenicity. Seems to be involved in a signaling transduction pathway leading to activation of MAPK1/ERK2. Plays a role in EGFR trafficking from recycling endosomes back to the cell membrane. In terms of biological role, guanine nucleotide exchange factor (GEF) which may activate RAB9A and RAB9B. Promotes the exchange of GDP to GTP, converting inactive GDP-bound Rab proteins into their active GTP-bound form. May block ERK2 activation stimulated by ABL1. May alter cell morphology and cell growth. This chain is DENN domain-containing protein 2B (Dennd2b), found in Mus musculus (Mouse).